A 531-amino-acid polypeptide reads, in one-letter code: Protein arginine N-methyltransferase 3 (531 aa).

The segment at 1 to 43 is disordered; the sequence is MCSLASGATGGRGAVENEEDLPELSDSGDEAAWEDEDDADLPH. Cys-2 carries the N-acetylcysteine modification. The span at 16–39 shows a compositional bias: acidic residues; sequence ENEEDLPELSDSGDEAAWEDEDDA. 2 positions are modified to phosphoserine: Ser-25 and Ser-27. Residues 48–71 form a C2H2-type zinc finger; it reads TPCLFCNRLFTSAEETFSHCKSEH. Residues 48–71 form an interaction with ZNF200 region; it reads TPCLFCNRLFTSAEETFSHCKSEH. Phosphoserine is present on Ser-171. Residues 186–531 are mediates interaction with ALDH1A1; that stretch reads MKQFAQDFVM…NNSTQTYGLQ (346 aa). Residues 217–531 form the SAM-dependent MTase PRMT-type domain; sequence DGVYFSSYGH…NNSTQTYGLQ (315 aa). 5 residues coordinate S-adenosyl-L-homocysteine: Arg-239, Gly-263, Asp-285, Ile-313, and Glu-314. Residues Glu-329 and Glu-338 contribute to the active site. An S-adenosyl-L-homocysteine-binding site is contributed by Ser-343.

This sequence belongs to the class I-like SAM-binding methyltransferase superfamily. Protein arginine N-methyltransferase family. Monomer and homodimer. Interacts with EPB41L3 (via FERM domain); the interaction is direct and inhibits the protein-arginine N-methyltransferase activity of PRMT3. Interacts with the 40S ribosomal protein RPS2. Interacts with ALDH1A1; the interaction is direct, inhibits ALDH1A1 aldehyde dehydrogenase activity and is independent of the methyltransferase activity of PRMT3. Interacts (via zinc-finger) with ZNF200 (via C-terminus); the interaction is direct and required to localize PRMT3 to the nucleus and inhibit its proteasomal degradation.

Its subcellular location is the cytoplasm. The protein localises to the cytosol. It is found in the nucleus. The enzyme catalyses L-arginyl-[protein] + S-adenosyl-L-methionine = N(omega)-methyl-L-arginyl-[protein] + S-adenosyl-L-homocysteine + H(+). It catalyses the reaction L-arginyl-[protein] + 2 S-adenosyl-L-methionine = N(omega),N(omega)-dimethyl-L-arginyl-[protein] + 2 S-adenosyl-L-homocysteine + 2 H(+). Its activity is regulated as follows. Inhibited by N-ethylmaleimide and high concentrations of zinc chloride. Allosterically inhibited by SGC707. Allosterically inhibited by (1-(benzo[d][1,2,3]thiadiazol- 6-yl)-3-(2-cyclohexenylethyl)urea) and derivatives thereof. In terms of biological role, protein-arginine N-methyltransferase that catalyzes both the monomethylation and asymmetric dimethylation of the guanidino nitrogens of arginine residues in target proteins, and therefore falls into the group of type I methyltransferases. Catalyzes the asymmetric arginine dimethylation at multiple sites in the Arg/Gly-rich region of small ribosomal subunit protein uS5/RPS2. Also appears to methylate other ribosomal proteins. May regulate retinoic acid synthesis and signaling by inhibiting ALDH1A1 retinal dehydrogenase activity. Contributes to methylation of histone H4 'Arg-3', a specific tag for epigenetic transcriptional activation. Mediates asymmetric arginine dimethylation of histone H4 'Arg-3' (H4R3me2a) in the promoter region of miRNA miR-3648, to promote its transcription and osteogenesis. In Homo sapiens (Human), this protein is Protein arginine N-methyltransferase 3.